Consider the following 171-residue polypeptide: Ribosome maturation factor RimM (171 aa).

Positions 96-169 (EGEFFIADMI…KMIIDPIKGM (74 aa)) constitute a PRC barrel domain.

The protein belongs to the RimM family. Binds ribosomal protein uS19.

It is found in the cytoplasm. Its function is as follows. An accessory protein needed during the final step in the assembly of 30S ribosomal subunit, possibly for assembly of the head region. Essential for efficient processing of 16S rRNA. May be needed both before and after RbfA during the maturation of 16S rRNA. It has affinity for free ribosomal 30S subunits but not for 70S ribosomes. This chain is Ribosome maturation factor RimM, found in Clostridioides difficile (strain 630) (Peptoclostridium difficile).